We begin with the raw amino-acid sequence, 329 residues long: IDS-like terpene synthase 1 (329 aa).

Residues Asp-79 and Asp-83 each coordinate Mg(2+).

Belongs to the FPP/GGPP synthase family. The cofactor is Mg(2+).

The catalysed reaction is (2E)-geranyl diphosphate + H2O = linalool + diphosphate. It carries out the reaction (2E,6E)-farnesyl diphosphate + H2O = (6E)-nerolidol + diphosphate. In terms of biological role, terpene synthase that shows monoterpene synthase activity and produces linalool, using geranyl diphosphate (GPP) as substrate. Also shows sesquiterpene synthase activity as it is able to convert farnesyl diphosphate (FPP) into (E)-nerolidol. The polypeptide is IDS-like terpene synthase 1 (Melampsora lini (Rust fungus)).